The following is a 282-amino-acid chain: MNLINNANKKLFEKINNLKNYSCQVKFSDAIEIEINDFDDNIIDLAKDLKPWRKGPFKLNATLIDSEWQSFIKFNGLKPFLNLKDKIVADVGCNNGYYMFKMLELEPKSIVGFDPSVLSFLQFSFINHFVKSNIKFELLGVQDLPNYNIKFDTILCLGVLYHRSDPIKTLKELKSSLNKGGEVFIDTMFIQRDDEFVLSPKSTYSKIPNIYFIPSIKALRNWCERAKFKTFDILSIKNTDFNEQRKTQWIYGESLENFLDPNDPKLTIEGYPAPKRVYVRLS.

Residues lysine 54, tryptophan 68, lysine 73, glycine 92, 114 to 116 (DPS), tyrosine 161, and arginine 276 each bind carboxy-S-adenosyl-L-methionine.

It belongs to the class I-like SAM-binding methyltransferase superfamily. CmoB family. As to quaternary structure, homotetramer.

It catalyses the reaction carboxy-S-adenosyl-L-methionine + 5-hydroxyuridine(34) in tRNA = 5-carboxymethoxyuridine(34) in tRNA + S-adenosyl-L-homocysteine + H(+). Its function is as follows. Catalyzes carboxymethyl transfer from carboxy-S-adenosyl-L-methionine (Cx-SAM) to 5-hydroxyuridine (ho5U) to form 5-carboxymethoxyuridine (cmo5U) at position 34 in tRNAs. The protein is tRNA U34 carboxymethyltransferase of Campylobacter fetus subsp. fetus (strain 82-40).